We begin with the raw amino-acid sequence, 108 residues long: Probable endonuclease 4 (108 aa).

H2, H36, D49, H51, and E81 together coordinate Zn(2+).

The protein belongs to the AP endonuclease 2 family. The cofactor is Zn(2+).

It catalyses the reaction Endonucleolytic cleavage to 5'-phosphooligonucleotide end-products.. Endonuclease IV plays a role in DNA repair. It cleaves phosphodiester bonds at apurinic or apyrimidinic (AP) sites, generating a 3'-hydroxyl group and a 5'-terminal sugar phosphate. In Thermotoga neapolitana, this protein is Probable endonuclease 4 (nfo).